The following is a 157-amino-acid chain: Ribosomal RNA large subunit methyltransferase H (157 aa).

Residues Leu73, Gly105, and Leu124 to Phe129 each bind S-adenosyl-L-methionine.

It belongs to the RNA methyltransferase RlmH family. As to quaternary structure, homodimer.

Its subcellular location is the cytoplasm. The enzyme catalyses pseudouridine(1915) in 23S rRNA + S-adenosyl-L-methionine = N(3)-methylpseudouridine(1915) in 23S rRNA + S-adenosyl-L-homocysteine + H(+). Functionally, specifically methylates the pseudouridine at position 1915 (m3Psi1915) in 23S rRNA. The chain is Ribosomal RNA large subunit methyltransferase H from Porphyromonas gingivalis (strain ATCC 33277 / DSM 20709 / CIP 103683 / JCM 12257 / NCTC 11834 / 2561).